A 504-amino-acid polypeptide reads, in one-letter code: Histidine ammonia-lyase (504 aa).

The segment at residues 142-144 (ASG) is a cross-link (5-imidazolinone (Ala-Gly)). Residue S143 is modified to 2,3-didehydroalanine (Ser).

Belongs to the PAL/histidase family. Post-translationally, contains an active site 4-methylidene-imidazol-5-one (MIO), which is formed autocatalytically by cyclization and dehydration of residues Ala-Ser-Gly.

Its subcellular location is the cytoplasm. The enzyme catalyses L-histidine = trans-urocanate + NH4(+). The protein operates within amino-acid degradation; L-histidine degradation into L-glutamate; N-formimidoyl-L-glutamate from L-histidine: step 1/3. This is Histidine ammonia-lyase from Staphylococcus aureus (strain bovine RF122 / ET3-1).